Consider the following 336-residue polypeptide: Fructose-1,6-bisphosphatase class 1 (336 aa).

Mg(2+) is bound by residues glutamate 90, aspartate 112, leucine 114, and aspartate 115. Substrate is bound by residues 115–118, asparagine 211, and lysine 277; that span reads DGSS. Glutamate 283 contributes to the Mg(2+) binding site.

This sequence belongs to the FBPase class 1 family. Homotetramer. Mg(2+) serves as cofactor.

The protein localises to the cytoplasm. It catalyses the reaction beta-D-fructose 1,6-bisphosphate + H2O = beta-D-fructose 6-phosphate + phosphate. It functions in the pathway carbohydrate biosynthesis; gluconeogenesis. This chain is Fructose-1,6-bisphosphatase class 1, found in Pseudomonas aeruginosa (strain ATCC 15692 / DSM 22644 / CIP 104116 / JCM 14847 / LMG 12228 / 1C / PRS 101 / PAO1).